Consider the following 604-residue polypeptide: MTDVSVSKIRNFCIIAHIDHGKSTLADRLLQETGTVQAREMKEQFLDNMELERERGITIKLQAARMNYRAQDGEQYVLNLIDTPGHVDFSYEVSRSLQACEGALLVVDASQGVEAQTLANVYLALENDLEIIPVLNKIDLPGADPERVKREIEEVIGLDCSGAIEASAKSGIGIGEILESIVHLVPPPSDTTGEPLRALIFDSYYDPYRGVIVYFRVIDGTVRKGDRIRLMASGKEYEIDELGVLSPNQVQVEELHAGEVGYIAASIKAVADARVGDTITLARARATEPLPGYVEAKPMVFCGLFPTDSDRYPDLRDALEKLQLSDAALQYEPETSSAMGFGFRCGFLGLLHMEIVQERLEREYNLDLITTAPSVVYQVTTLDGEVLRVDNPSKLPPPQQREKIEEPYVKVEIITPENYVGALMDLCQTRRGIFIDMKYLTQERTTLIYEMPLAEVVTDFFDQMKSRTKGYASMEYSLIGYREGELVRMDILINSEPVDPLATIVHRDKAYYVGKALVEKLKELIPRHQFKIPLQAAIGSRVIASESIPALRKDVLAKCYGGDISRKKKLLQKQAKGKKRMKAIGTVDVPQEAFMAVLKLDREG.

In terms of domain architecture, tr-type G spans 7–189; sequence SKIRNFCIIA…SIVHLVPPPS (183 aa). Residues 19–24 and 136–139 each bind GTP; these read DHGKST and NKID.

This sequence belongs to the TRAFAC class translation factor GTPase superfamily. Classic translation factor GTPase family. LepA subfamily.

It is found in the cell inner membrane. The enzyme catalyses GTP + H2O = GDP + phosphate + H(+). Required for accurate and efficient protein synthesis under certain stress conditions. May act as a fidelity factor of the translation reaction, by catalyzing a one-codon backward translocation of tRNAs on improperly translocated ribosomes. Back-translocation proceeds from a post-translocation (POST) complex to a pre-translocation (PRE) complex, thus giving elongation factor G a second chance to translocate the tRNAs correctly. Binds to ribosomes in a GTP-dependent manner. This Synechococcus elongatus (strain ATCC 33912 / PCC 7942 / FACHB-805) (Anacystis nidulans R2) protein is Elongation factor 4.